Reading from the N-terminus, the 182-residue chain is MPLDVALKRKYYEEVRPELIRRFGYQNVWEVPRLEKVVINQGLGEAKEDARILEKAAQELALITGQKPAVTRAKKSISNFKLRKGMPIGLRVTLRRDRMWIFLEKLLNVALPRIRDFRGLNPNSFDGRGNYNLGLREQLIFPEITYDMVDALRGMDIAVVTTAETDEEARALLELLGFPFRK.

Part of the 50S ribosomal subunit; part of the 5S rRNA/uL5/uL18/bL25 (TL7) subcomplex; has also been isolated as a complex with 5S rRNA, bL25 (TL7) and DNA binding protein II. Forms a bridge to the 30S subunit in the 70S ribosome, contacting protein uS13; this bridge is straddled by the 5S rRNA. Contacts the P site tRNA.

Functionally, this is one of the proteins that bind and probably mediate the attachment of the 5S RNA into the large ribosomal subunit, where it forms part of the central protuberance. In the 70S ribosome it contacts protein S13 of the 30S subunit (forming bridge B1b) connecting the head of the 30S subunit to the top of the 50S subunit. The bridge itself contacts the P site tRNA and is implicated in movement during ribosome translocation. Also contacts the P site tRNA independently of the intersubunit bridge; the 5S rRNA and some of its associated proteins might help stabilize positioning of ribosome-bound tRNAs. The polypeptide is Large ribosomal subunit protein uL5 (rplE) (Thermus thermophilus (strain ATCC 27634 / DSM 579 / HB8)).